A 658-amino-acid chain; its full sequence is Staphylocoagulase (658 aa).

The N-terminal stretch at 1 to 26 (MKKQIISLGALAVASSLFTWDNKADA) is a signal peptide. Composition is skewed to polar residues over residues 391–406 (MEQN…TQPT), 428–440 (GTES…QGES), 499–514 (PSET…QDGT), and 521–531 (PTQNKPSETNA). The interval 391 to 531 (MEQNRPSLSD…TQNKPSETNA (141 aa)) is disordered. 6 repeat units span residues 492–518 (ARPR…VSYG), 519–545 (ARPT…VSYG), 546–572 (ARPT…VSYG), 573–599 (ARPT…VSYG), 600–626 (ARPT…VSYG), and 627–653 (ARPT…ATYG). The 6 X 27 AA tandem repeats of A-R-P-[RT]-[FQY]-[NK]-K-P-S-[EK]-T-N-A-Y-N-V-T-T-[NH]-[QA]-[DN]-G-[TQ]-[VA]-[ST]-Y-G stretch occupies residues 492–653 (ARPRFNKPSE…THADGTATYG (162 aa)). The interval 619-658 (ANGQVSYGARPTQKKPSETNAYNVTTHADGTATYGPRVTK) is disordered. Residues 636 to 646 (ETNAYNVTTHA) are compositionally biased toward polar residues.

This sequence belongs to the staphylocoagulase family.

Functionally, staphylocoagulase is an extracellular protein which specifically forms a complex with human prothrombin. This complex named staphylothrombin can clot fibrinogen without any proteolytic cleavage of prothrombin. The chain is Staphylocoagulase from Staphylococcus aureus.